The primary structure comprises 389 residues: Capreomycidine synthase (389 aa).

Position 230 is an N6-(pyridoxal phosphate)lysine (K230).

The protein belongs to the class-II pyridoxal-phosphate-dependent aminotransferase family. It depends on pyridoxal 5'-phosphate as a cofactor.

It carries out the reaction (2S,3S)-hydroxyarginine = (2S,3R)-capreomycidine + H2O. The protein operates within antibiotic biosynthesis. In terms of biological role, involved in the biosynthesis of capreomycidine, an unusual amino acid used by non-ribosomal peptide synthases (NRPS) to make the tuberactinomycin class of peptide antibiotic such as viomycin and capreomycin. Catalyzes the dehydration of the C3 hydroxyl of (3S)-hydroxy-(2S)-arginine and the intramolecular cyclization to yield (2S,3R)-capreomycidine. The sequence is that of Capreomycidine synthase from Streptomyces vinaceus.